A 183-amino-acid polypeptide reads, in one-letter code: Ubiquitin carboxyl-terminal hydrolase 17-like protein 23 (183 aa).

Residues 80–183 form the USP domain; that stretch reads AGLQNMGNTC…KACLPGHKQV (104 aa).

The protein belongs to the peptidase C19 family. USP17 subfamily.

The protein resides in the nucleus. Its subcellular location is the endoplasmic reticulum. The polypeptide is Ubiquitin carboxyl-terminal hydrolase 17-like protein 23 (USP17L23) (Homo sapiens (Human)).